Reading from the N-terminus, the 108-residue chain is uncharacterized protein (108 aa).

Residues Met1 to Thr14 are compositionally biased toward polar residues. The segment at Met1 to Gly31 is disordered. Over residues Gly15–Gly31 the composition is skewed to basic and acidic residues.

It belongs to the SUI1 family.

This is an uncharacterized protein from Escherichia coli (strain K12).